A 417-amino-acid chain; its full sequence is UDP-N-acetylglucosamine 1-carboxyvinyltransferase (417 aa).

22-23 is a phosphoenolpyruvate binding site; the sequence is KN. A UDP-N-acetyl-alpha-D-glucosamine-binding site is contributed by Arg-91. Cys-115 (proton donor) is an active-site residue. Cys-115 carries the post-translational modification 2-(S-cysteinyl)pyruvic acid O-phosphothioketal. Residues 120-124, Asp-304, and Ile-326 each bind UDP-N-acetyl-alpha-D-glucosamine; that span reads RPVDL.

The protein belongs to the EPSP synthase family. MurA subfamily.

Its subcellular location is the cytoplasm. The catalysed reaction is phosphoenolpyruvate + UDP-N-acetyl-alpha-D-glucosamine = UDP-N-acetyl-3-O-(1-carboxyvinyl)-alpha-D-glucosamine + phosphate. It participates in cell wall biogenesis; peptidoglycan biosynthesis. Cell wall formation. Adds enolpyruvyl to UDP-N-acetylglucosamine. This is UDP-N-acetylglucosamine 1-carboxyvinyltransferase from Nitratidesulfovibrio vulgaris (strain DSM 19637 / Miyazaki F) (Desulfovibrio vulgaris).